Consider the following 419-residue polypeptide: Tyrosine--tRNA ligase 2 (419 aa).

L-tyrosine is bound at residue tyrosine 34. A 'HIGH' region motif is present at residues 39 to 48; the sequence is PTGDSMHIGH. L-tyrosine is bound by residues tyrosine 168 and glutamine 172. Residues 230–234 carry the 'KMSKS' region motif; the sequence is KFGKS. Lysine 233 provides a ligand contact to ATP. The S4 RNA-binding domain occupies 352-418; it reads KNIVEWLVDL…GKKNYSLVKL (67 aa).

Belongs to the class-I aminoacyl-tRNA synthetase family. TyrS type 1 subfamily. Homodimer.

The protein resides in the cytoplasm. It catalyses the reaction tRNA(Tyr) + L-tyrosine + ATP = L-tyrosyl-tRNA(Tyr) + AMP + diphosphate + H(+). Functionally, catalyzes the attachment of tyrosine to tRNA(Tyr) in a two-step reaction: tyrosine is first activated by ATP to form Tyr-AMP and then transferred to the acceptor end of tRNA(Tyr). This chain is Tyrosine--tRNA ligase 2, found in Bacillus thuringiensis subsp. konkukian (strain 97-27).